The following is an 81-amino-acid chain: Putative membrane protein insertion efficiency factor (81 aa).

The protein belongs to the UPF0161 family.

It is found in the cell inner membrane. Could be involved in insertion of integral membrane proteins into the membrane. The chain is Putative membrane protein insertion efficiency factor from Legionella pneumophila subsp. pneumophila (strain Philadelphia 1 / ATCC 33152 / DSM 7513).